The following is a 79-amino-acid chain: Defensin-1 (79 aa).

A signal peptide spans 1–23; it reads MKFLNVVAIALLVVACLAVYSNA. Intrachain disulfides connect Cys-42-Cys-69, Cys-55-Cys-75, and Cys-59-Cys-77.

Belongs to the invertebrate defensin family. Type 1 subfamily.

The protein resides in the secreted. The protein is Defensin-1 (SMD1) of Stomoxys calcitrans (Stable fly).